The chain runs to 1361 residues: Xanthine dehydrogenase 1 (1361 aa).

The 2Fe-2S ferredoxin-type domain maps to Thr-15 to Leu-101. The [2Fe-2S] cluster site is built by Cys-53, Cys-58, Cys-61, Cys-83, Cys-123, Cys-126, Cys-159, and Cys-161. Residues Arg-257 to Pro-442 enclose the FAD-binding PCMH-type domain. FAD-binding positions include Leu-285–Val-292, Phe-365, Cys-375–Asn-379, Asp-388, Leu-432, and Lys-450. Mo-molybdopterin-binding residues include Gln-796 and Phe-827. Substrate contacts are provided by Glu-831 and Arg-909. Residue Arg-941 coordinates Mo-molybdopterin. Phe-943 and Thr-1039 together coordinate substrate. Ala-1108 is a binding site for Mo-molybdopterin. Residue Glu-1297 is the Proton acceptor of the active site.

It belongs to the xanthine dehydrogenase family. Homodimer. Requires [2Fe-2S] cluster as cofactor. FAD is required as a cofactor. The cofactor is Mo-molybdopterin. In terms of tissue distribution, expressed in roots, leaves, stems, flowers and siliques.

It carries out the reaction xanthine + NAD(+) + H2O = urate + NADH + H(+). The enzyme catalyses hypoxanthine + NAD(+) + H2O = xanthine + NADH + H(+). Key enzyme involved in purine catabolism. Catalyzes the oxidation of hypoxanthine to xanthine and the oxidation of xanthine to urate. Regulates the level of ureides and plays an important role during plant growth and development, senescence and response to stresses. Possesses NADH oxidase activity and may contribute to the generation of superoxide anions in planta. The chain is Xanthine dehydrogenase 1 (XDH1) from Arabidopsis thaliana (Mouse-ear cress).